A 305-amino-acid polypeptide reads, in one-letter code: Ornithine carbamoyltransferase (305 aa).

Residues 54–57 (STRT), Gln-81, Arg-105, and 132–135 (HPCQ) contribute to the carbamoyl phosphate site. L-ornithine is bound by residues Asn-163, Asp-220, and 224 to 225 (SM). Residues 260-261 (CL) and Arg-288 each bind carbamoyl phosphate.

Belongs to the aspartate/ornithine carbamoyltransferase superfamily. OTCase family.

Its subcellular location is the cytoplasm. The enzyme catalyses carbamoyl phosphate + L-ornithine = L-citrulline + phosphate + H(+). Its pathway is amino-acid biosynthesis; L-arginine biosynthesis; L-arginine from L-ornithine and carbamoyl phosphate: step 1/3. Functionally, reversibly catalyzes the transfer of the carbamoyl group from carbamoyl phosphate (CP) to the N(epsilon) atom of ornithine (ORN) to produce L-citrulline. The polypeptide is Ornithine carbamoyltransferase (Chromohalobacter salexigens (strain ATCC BAA-138 / DSM 3043 / CIP 106854 / NCIMB 13768 / 1H11)).